The sequence spans 379 residues: GDP-mannose transporter 1 (379 aa).

The Cytoplasmic segment spans residues 1-39 (MTDNRKPEDYTIEMDKLGQNKNYQAPPPPPQPRSSTASS). Positions 17–38 (LGQNKNYQAPPPPPQPRSSTAS) are disordered. Residues 40 to 60 (ISNNAALSVLAYCGSSILMTV) traverse the membrane as a helical segment. Residues 61–69 (MNKYVLSSD) lie on the Lumenal side of the membrane. A helical transmembrane segment spans residues 70–90 (FNLNFFLLCVQSLVCIIAIQL). Residues 91–110 (CKACGLITYRDFNLDEARKW) are Cytoplasmic-facing. Residues 111-133 (FPITLLLIGMIYTGSKALQFLSI) form a helical membrane-spanning segment. The Lumenal segment spans residues 134–136 (PVY). A helical transmembrane segment spans residues 137–156 (TIFKNLTIILIAYGEVLWFG). Residues 157–162 (GSVTNL) are Cytoplasmic-facing. The chain crosses the membrane as a helical span at residues 163-182 (TLFSFGLMVFSSIIAAWADI). Residues 183-198 (KHAIESSGDATSKVST) are Lumenal-facing. Residues 199–219 (LNAGYIWMLINCLCTSSYVLG) traverse the membrane as a helical segment. Residues 220-233 (MRKRIKLTNFKDFD) are Cytoplasmic-facing. The chain crosses the membrane as a helical span at residues 234–254 (TMFYNNLLSIPVLIVCSGILE). Over 255–272 (DWSPANVARNFPSADRNG) the chain is Lumenal. The helical transmembrane segment at 273-293 (IMFAMILSGLSTVFISYTSAW) threads the bilayer. Topologically, residues 294–301 (CVRVTSST) are cytoplasmic. The helical transmembrane segment at 302–322 (TYSMVGALNKLPIALSGLIFF) threads the bilayer. Over 323 to 325 (DAP) the chain is Lumenal. A helical transmembrane segment spans residues 326–346 (VTFPSVSAIMVGFVSGIVYAV). The Cytoplasmic segment spans residues 347-379 (AKIKQNAKPKVGILPTTNPVSASSQSMRDSLRS).

This sequence belongs to the TPT transporter family. SLC35D subfamily. In terms of assembly, homooligomer.

It localises to the golgi apparatus membrane. The protein resides in the cytoplasmic vesicle membrane. It is found in the endoplasmic reticulum membrane. Involved in the import of GDP-mannose from the cytoplasm into the Golgi lumen. The protein is GDP-mannose transporter 1 (gmt1) of Emericella nidulans (strain FGSC A4 / ATCC 38163 / CBS 112.46 / NRRL 194 / M139) (Aspergillus nidulans).